The following is a 448-amino-acid chain: Putative F-box/LRR-repeat protein At3g44810 (448 aa).

An F-box domain is found at 6 to 54 (TASLNCLPDELLVHVLSSLETKQAASTSVLSKRWRTLFAVRRNLDFDDS). LRR repeat units follow at residues 117 to 141 (VSEL…VFRS), 143 to 165 (TLVK…TCLP), 190 to 213 (CPAL…VSSK), 228 to 251 (FDWF…TYAR), 290 to 313 (VRNV…CKGG), and 421 to 443 (IVDS…SSRL).

This is Putative F-box/LRR-repeat protein At3g44810 from Arabidopsis thaliana (Mouse-ear cress).